Here is a 147-residue protein sequence, read N- to C-terminus: 3-dehydroquinate dehydratase (147 aa).

The Proton acceptor role is filled by Tyr-24. Positions 74, 80, and 87 each coordinate substrate. His-100 acts as the Proton donor in catalysis. Residues 101 to 102 and Arg-111 contribute to the substrate site; that span reads LS.

This sequence belongs to the type-II 3-dehydroquinase family. As to quaternary structure, homododecamer.

It carries out the reaction 3-dehydroquinate = 3-dehydroshikimate + H2O. It participates in metabolic intermediate biosynthesis; chorismate biosynthesis; chorismate from D-erythrose 4-phosphate and phosphoenolpyruvate: step 3/7. Catalyzes a trans-dehydration via an enolate intermediate. The sequence is that of 3-dehydroquinate dehydratase from Azorhizobium caulinodans (strain ATCC 43989 / DSM 5975 / JCM 20966 / LMG 6465 / NBRC 14845 / NCIMB 13405 / ORS 571).